Consider the following 296-residue polypeptide: Formamidopyrimidine-DNA glycosylase (296 aa).

The active-site Schiff-base intermediate with DNA is the Pro-2. Catalysis depends on Glu-3, which acts as the Proton donor. Lys-61 functions as the Proton donor; for beta-elimination activity in the catalytic mechanism. DNA contacts are provided by His-95, Arg-122, and Lys-169. An FPG-type zinc finger spans residues 255 to 289 (NAYGRNDQPCARCGTPIQRETFMNRSSYSCPRCQP). Arg-279 acts as the Proton donor; for delta-elimination activity in catalysis.

This sequence belongs to the FPG family. As to quaternary structure, monomer. Zn(2+) serves as cofactor.

It carries out the reaction Hydrolysis of DNA containing ring-opened 7-methylguanine residues, releasing 2,6-diamino-4-hydroxy-5-(N-methyl)formamidopyrimidine.. The catalysed reaction is 2'-deoxyribonucleotide-(2'-deoxyribose 5'-phosphate)-2'-deoxyribonucleotide-DNA = a 3'-end 2'-deoxyribonucleotide-(2,3-dehydro-2,3-deoxyribose 5'-phosphate)-DNA + a 5'-end 5'-phospho-2'-deoxyribonucleoside-DNA + H(+). Involved in base excision repair of DNA damaged by oxidation or by mutagenic agents. Acts as a DNA glycosylase that recognizes and removes damaged bases. Has a preference for oxidized purines, such as 7,8-dihydro-8-oxoguanine (8-oxoG). Has AP (apurinic/apyrimidinic) lyase activity and introduces nicks in the DNA strand. Cleaves the DNA backbone by beta-delta elimination to generate a single-strand break at the site of the removed base with both 3'- and 5'-phosphates. This Thermobifida fusca (strain YX) protein is Formamidopyrimidine-DNA glycosylase.